The primary structure comprises 166 residues: Endoribonuclease YbeY (166 aa).

The Zn(2+) site is built by histidine 126, histidine 130, and histidine 136.

This sequence belongs to the endoribonuclease YbeY family. It depends on Zn(2+) as a cofactor.

Its subcellular location is the cytoplasm. Functionally, single strand-specific metallo-endoribonuclease involved in late-stage 70S ribosome quality control and in maturation of the 3' terminus of the 16S rRNA. The polypeptide is Endoribonuclease YbeY (Laribacter hongkongensis (strain HLHK9)).